A 154-amino-acid polypeptide reads, in one-letter code: Interleukin-7 (154 aa).

Residues 1 to 25 (MFHVSFRYIFGIPPLILVLLPVTSS) form the signal peptide. Disulfide bonds link C27–C145, C58–C133, and C71–C116. Residues N94 and N115 are each glycosylated (N-linked (GlcNAc...) asparagine).

The protein belongs to the IL-7/IL-9 family. As to quaternary structure, interacts with IL7R and CSF2RG. Three disulfide bonds are present.

It localises to the secreted. In terms of biological role, hematopoietic cytokine that plays an essential role in the development, expansion, and survival of naive and memory T-cells and B-cells thereby regulating the number of mature lymphocytes and maintaining lymphoid homeostasis. Mechanistically, exerts its biological effects through a receptor composed of IL7RA subunit and the cytokine receptor common subunit gamma/CSF2RG. Binding to the receptor leads to activation of various kinases including JAK1 or JAK3 depending on the cell type and subsequently propagation of signals through activation of several downstream signaling pathways including the PI3K/Akt/mTOR or the JAK-STAT5. This Mus musculus (Mouse) protein is Interleukin-7 (Il7).